Consider the following 203-residue polypeptide: Small ribosomal subunit protein uS4 (203 aa).

Residues 93-156 enclose the S4 RNA-binding domain; that stretch reads RRLDNVVYRL…AKVPAILEAV (64 aa).

This sequence belongs to the universal ribosomal protein uS4 family. Part of the 30S ribosomal subunit. Contacts protein S5. The interaction surface between S4 and S5 is involved in control of translational fidelity.

One of the primary rRNA binding proteins, it binds directly to 16S rRNA where it nucleates assembly of the body of the 30S subunit. In terms of biological role, with S5 and S12 plays an important role in translational accuracy. The chain is Small ribosomal subunit protein uS4 from Streptococcus thermophilus (strain CNRZ 1066).